The chain runs to 2176 residues: MSSAHPKGDSKEPPKHGNSKEKPNYGQSQYSYSAMSNLVTQADRRFVSRRDAEPTGEPESLVNRVSIADMGSRARIEKPSTLPLELTQEVQEVRLPRKDAESLEIGIRQPEREKRSSAILKYFDSFEILKYNPLTDETREVYDYILSFIQQYLGDQSPEILRSAADLIIELLKDSSLDEQGRKKQIEEVLSTELPQDRFSQLVNLGNRLTDYTVEQEEELNEEGVNESGVPVLFNEADEEEEAVEAMEEDEVAEDEDVVLETSISQEEEKKNIENPDTEVTFISADTKKVTEIPTVHPREIDAFWLQREIAKYFADAVVCQEKTNQAFEALSADYDLGELENELMSIFDYEHFYLVQLLTKNRWTIVSCTMLKRAATDEERLGVEEQIRAAGRSWILEALRPGAITIPDDGLNELNNNVVEKAEPAPVSEIPLSKTLTSHKIVPKHQVDLENYVFTEGSRLMSNKAVKLPEGSFRRTGKGYEEIHVPAPNKAVLGADERLVKIKELPEWSHQAFLNTQSLNRIQSHLYPIAFGTDENILLCAPTGAGKTNVAMLCILNELQKHLREDLSFNLQNFKIVYIAPLKALVQEMVNNFSKRLTPYNIRVAELTGDSQLTKQQISETQIIVTTPEKWDIITRKANDLSYVNLVRLVIIDEVHLLHDERGPVLESIVARIFRHQEETLEQVRLVGLSATLPNYTDVASFLHVDPKKGLFYFDSTYRPCPLKQEFIGITEKTPFKRMQTTNEACYEKVMQHAGKNQVLIFVHSRKETAKTARFIRDKALEEETIGHLLRSDAASREILRAEADSTSDENLKDLLPYGFAIHHAGMRREDRQTSEDLFADGTIQVLVSTATLAWGVNLPAHTVIIKGTQVYSPEKGIWTELSPQDVLQMLGRAGRPQFDTYGEGIIITAHSELQYYLSLMNQQLPIESQFMRRLADCLNAEVSLGTVRSIEDGVDWLGYTYLYVRMLRSPALYSVGPEYDDDKYLVQKRADLLHSAAILLEKCKLLVYNRQSGTLTATELGKVAASYYVTHNSMAIYNRLLMQTTSFIELFRVFSFSDEFKHIPVREEEKVELAKLLERVPIPIRERLDEPAAKINALLQSYISRQRLDGFALVADMVYVTQSAGRIMRAIFEISLRRGWSSVATLSLDTCKMIEKRLWPTMSPLRQFPNCPSEVIRRVEKKEFPWQRYFDLDPAELGELVGVPKEGRRVYNMVQSFPRLSVEAHVQPITRSLVRVELVINSQFNWDDHLSGTSEAFWILVEDVDGDRLLHYEQFFLLKKYKDDEHIVNFTVPLLEPLPPCYFIKIVSDRWLHSITKVPLSFQRLIMPEKFPAPTPLLDLQNAPVSSLNNPSFISLYPNFKFFNKIQTQVFNSVYKTNDSVFIGAPNGSGKTVCAELALLHHWSQEDYGTAVYIAPIQEIVDRRYEEWYGKFSDLGDGKVLVKLTGERSQDLKLIQVADLIFCTPSQWDSLSKRWRSMRSIQKVDFYICDELQLLGGFYGPLYEIVISRIRYMAVQLEKNIRVVGLSVSVANARDLGEWLGTSPQCIFNFSPKDRPNPLTIHLQSFSITHFPSLMLAMSKPIYRSLKNFISQRKSTIVFTPDRKVAKQLAFDLVTFSMADEDEYLFSLMENEAFNKVEDAALQQSLKHGIAYISEITSSNDQNIVQYLYRHGLIKVLIASRDVIYSLKAKSNAVIVMGTQYYDGKEHRYIDYPISELLQMLGFTASIGSSELSQVILMTVTTKKEYYKKFLNEPLPMESHLQVWLHDAFVSEISTQTIESKQDAVDWLTWSYMYRRLVANPAYYGLQDITHESVSEFLSDLVETTMNDLSEARLITVDDEDDSCVALNLAMIASHYGITYITMQTFALSLSERTKMKGLLEIVTSAAEYEQLPIRKYEDIVLERIHSRLPVRLSNPNYEDPHTKSFILLAAHFSRFELPPGLVIDQKFILTRVHNLLGACVDTLSSEGHLIACIRPMEMSQMVTQALWDRDSPLKQIPYFDDALIERCNKEGVHDVFDIIDLDDEKRTELLHMDNAHLAKCAEFINKYPDIDIDFEIEDSEDVHANSPSVLIVQLTRELEEDEEVDTTVIAPYFPAQKTEHWWLVISDDKTLLAIKKITLGRSLTTKMEFVPPAMGTLKYKLSCFSDSYMGVDYEKEFECNVLEPLDTEMEDGE.

Residues 1-23 (MSSAHPKGDSKEPPKHGNSKEKP) show a composition bias toward basic and acidic residues. A disordered region spans residues 1–34 (MSSAHPKGDSKEPPKHGNSKEKPNYGQSQYSYSA). Polar residues predominate over residues 25-34 (YGQSQYSYSA). Residues 529 to 712 (PIAFGTDENI…FLHVDPKKGL (184 aa)) form the Helicase ATP-binding 1 domain. An ATP-binding site is contributed by 542–549 (APTGAGKT). The DEAH box motif lies at 654–657 (DEVH). Residues 723–956 (PLKQEFIGIT…GTVRSIEDGV (234 aa)) enclose the Helicase C-terminal 1 domain. One can recognise an SEC63 1 domain in the interval 1019 to 1324 (ATELGKVAAS…HSITKVPLSF (306 aa)). The region spanning 1374–1550 (NSVYKTNDSV…WLGTSPQCIF (177 aa)) is the Helicase ATP-binding 2 domain. 1387 to 1394 (APNGSGKT) lines the ATP pocket. One can recognise a Helicase C-terminal 2 domain in the interval 1587–1771 (SLKNFISQRK…HLQVWLHDAF (185 aa)). Residues 1848–2162 (ALNLAMIASH…GVDYEKEFEC (315 aa)) form the SEC63 2 domain.

Belongs to the 40S cdc5-associated complex (or cwf complex), a spliceosome sub-complex reminiscent of a late-stage spliceosome composed of the U2, U5 and U6 snRNAs and at least brr2, cdc5, cwf2/prp3, cwf3/syf1, cwf4/syf3, cwf5/ecm2, spp42/cwf6, cwf7/spf27, cwf8, cwf9, cwf10, cwf11, cwf12, prp45/cwf13, cwf14, cwf15, cwf16, cwf17, cwf18, cwf19, cwf20, cwf21, cwf22, cwf23, cwf24, cwf25, cwf26, cyp7/cwf27, cwf28, cwf29/ist3, lea1, msl1, prp5/cwf1, prp10, prp12/sap130, prp17, prp22, sap61, sap62, sap114, sap145, slu7, smb1, smd1, smd3, smf1, smg1 and syf2. Interacts with prp1. Interacts with tls1.

It localises to the cytoplasm. Its subcellular location is the nucleus. The enzyme catalyses ATP + H2O = ADP + phosphate + H(+). Involved in pre-mRNA splicing. May be involved in endoplasmic reticulum-associated protein degradation (ERAD) and required for growth at low and high temperatures. Required for pre-spliceosome formation, which is the first step of pre-mRNA splicing. This protein is associated with snRNP U5. Has a role in branch site-3' splice site selection. Associates with the branch site-3' splice 3'-exon region. This Schizosaccharomyces pombe (strain 972 / ATCC 24843) (Fission yeast) protein is Pre-mRNA-splicing factor brr2 (brr2).